Reading from the N-terminus, the 176-residue chain is Membrane glycoprotein UL144 (176 aa).

Positions 1–20 are cleaved as a signal peptide; sequence MKPLVMLICFGVILLQLGVT. Residues 58-95 form a TNFR-Cys repeat; sequence PCPNGTYVSGLYNCTDCTQCNVTQVMIRNCTSTNNTVC. 3 disulfides stabilise this stretch: Cys59–Cys71, Cys74–Cys87, and Cys77–Cys95. Residues 134–154 traverse the membrane as a helical segment; that stretch reads LAWLSLFIFLVGIILLILYLI.

Interacts with host TRIM23; this interaction causes auto-ubiquitination of TRAF6, leading to NF-kappaB activation.

Its subcellular location is the membrane. Its function is as follows. Activates NF-kappa-B in a tumor necrosis factor receptor (TNFR)-associated factor 6 (TRAF6)-dependent manner, causing the up-regulation of the chemokine CCL22. This is Membrane glycoprotein UL144 (UL144) from Human cytomegalovirus (strain Merlin) (HHV-5).